The following is a 241-amino-acid chain: Uridylate kinase (241 aa).

K12–G15 contacts ATP. An involved in allosteric activation by GTP region spans residues G20 to G25. G54 is a binding site for UMP. ATP is bound by residues G55 and R59. UMP-binding positions include D74 and T135–T142. ATP-binding residues include N163, Y169, and D172.

It belongs to the UMP kinase family. Homohexamer.

Its subcellular location is the cytoplasm. The enzyme catalyses UMP + ATP = UDP + ADP. The protein operates within pyrimidine metabolism; CTP biosynthesis via de novo pathway; UDP from UMP (UMPK route): step 1/1. Its activity is regulated as follows. Allosterically activated by GTP. Inhibited by UTP. Catalyzes the reversible phosphorylation of UMP to UDP. The chain is Uridylate kinase from Dehalococcoides mccartyi (strain CBDB1).